The chain runs to 430 residues: Aspartate aminotransferase, mitochondrial (430 aa).

The transit peptide at 1–29 (MALLHSGRVLPGIAAAFHPGLAAAASARA) directs the protein to the mitochondrion. Phosphothreonine is present on threonine 48. An N6-acetyllysine modification is found at lysine 59. Glycine 65 is a binding site for substrate. Position 73 is an N6-acetyllysine; alternate (lysine 73). Lysine 73 is modified (N6-succinyllysine; alternate). At lysine 82 the chain carries N6-acetyllysine. Lysine 90 bears the N6-acetyllysine; alternate mark. Lysine 90 is subject to N6-succinyllysine; alternate. Position 96 is a 3'-nitrotyrosine; alternate (tyrosine 96). The residue at position 96 (tyrosine 96) is a Phosphotyrosine; alternate. 2 positions are modified to N6-acetyllysine; alternate: lysine 107 and lysine 122. An N6-succinyllysine; alternate mark is found at lysine 107 and lysine 122. Residue serine 143 is modified to Phosphoserine. Lysine 159 is modified (N6-acetyllysine; alternate). Lysine 159 is modified (N6-succinyllysine; alternate). Tryptophan 162 lines the substrate pocket. Lysine 185 carries the N6-acetyllysine; alternate modification. An N6-succinyllysine; alternate modification is found at lysine 185. Residue asparagine 215 participates in substrate binding. Lysine 227 is modified (N6-succinyllysine). The residue at position 234 (lysine 234) is an N6-acetyllysine. N6-acetyllysine; alternate is present on residues lysine 279 and lysine 296. Lysine 279 is subject to N6-(pyridoxal phosphate)lysine; alternate. The residue at position 296 (lysine 296) is an N6-succinyllysine; alternate. Lysine 302 is modified (N6-acetyllysine). N6-acetyllysine; alternate is present on lysine 309. Lysine 309 is subject to N6-succinyllysine; alternate. Arginine 313 carries the post-translational modification Asymmetric dimethylarginine. Threonine 333 bears the Phosphothreonine mark. Lysine 338 is modified (N6-acetyllysine; alternate). Lysine 338 is modified (N6-succinyllysine; alternate). Lysine 345 bears the N6-acetyllysine mark. Residue lysine 363 is modified to N6-acetyllysine; alternate. Lysine 363 carries the post-translational modification N6-succinyllysine; alternate. Lysine 364 and lysine 387 each carry N6-acetyllysine. N6-acetyllysine; alternate occurs at positions 396 and 404. N6-succinyllysine; alternate occurs at positions 396 and 404. Arginine 407 is a binding site for substrate.

It belongs to the class-I pyridoxal-phosphate-dependent aminotransferase family. As to quaternary structure, homodimer. Pyridoxal 5'-phosphate is required as a cofactor.

Its subcellular location is the mitochondrion matrix. The protein localises to the cell membrane. The catalysed reaction is L-aspartate + 2-oxoglutarate = oxaloacetate + L-glutamate. It carries out the reaction L-kynurenine + 2-oxoglutarate = kynurenate + L-glutamate + H2O. Its function is as follows. Catalyzes the irreversible transamination of the L-tryptophan metabolite L-kynurenine to form kynurenic acid (KA). As a member of the malate-aspartate shuttle, it has a key role in the intracellular NAD(H) redox balance. Is important for metabolite exchange between mitochondria and cytosol, and for amino acid metabolism. Facilitates cellular uptake of long-chain free fatty acids. The sequence is that of Aspartate aminotransferase, mitochondrial from Homo sapiens (Human).